A 655-amino-acid polypeptide reads, in one-letter code: Squalene-tetrahymanol cyclase THC1 (655 aa).

Residues 1–20 (MKKILIGLIIGLFLFSSVNA) form the signal peptide. 4 N-linked (GlcNAc...) asparagine glycosylation sites follow: Asn-23, Asn-44, Asn-69, and Asn-77. Catalysis depends on Asp-373, which acts as the Proton donor. PFTB repeat units lie at residues 393–435 (IPET…GIAN) and 515–562 (VQNS…GLLA).

Belongs to the terpene cyclase/mutase family.

Its subcellular location is the membrane. It carries out the reaction tetrahymanol = squalene + H2O. Its activity is regulated as follows. 2,3-iminosqualene and N,N-dimethyldodecylamine~N-oxlde are effective inhibitors with IC(50) values of 50 and 30 nM, respectively. Its function is as follows. Squalene cyclase that catalyzes the oxygen-independent cyclization of squalene into tetrahymanol, a triterpenoid sterol with five cyclohexyl rings that is involved in membrane integrity, permeability and fluidity. This Tetrahymena thermophila (strain SB210) protein is Squalene-tetrahymanol cyclase THC1.